Consider the following 185-residue polypeptide: Large ribosomal subunit protein bL25 (185 aa).

Belongs to the bacterial ribosomal protein bL25 family. CTC subfamily. As to quaternary structure, part of the 50S ribosomal subunit; part of the 5S rRNA/L5/L18/L25 subcomplex. Contacts the 5S rRNA. Binds to the 5S rRNA independently of L5 and L18.

This is one of the proteins that binds to the 5S RNA in the ribosome where it forms part of the central protuberance. This is Large ribosomal subunit protein bL25 from Chlamydia trachomatis serovar L2 (strain ATCC VR-902B / DSM 19102 / 434/Bu).